Consider the following 421-residue polypeptide: Phosphoglycerate kinase (421 aa).

Residues Val-23, Asp-24, Phe-25, Asn-26, Gln-41, Arg-42, Ser-65, His-66, Gly-68, Arg-69, Leu-124, Arg-125, His-172, and Arg-173 each coordinate (2R)-3-phosphoglycerate. Gly-216 contributes to the ADP binding site. Gly-216 provides a ligand contact to CDP. AMP is bound at residue Lys-218. Residue Asp-221 participates in CDP binding. Asp-221 contacts Mg(2+). Residue Lys-222 coordinates AMP. Lys-222 is a binding site for ATP. Gly-240 contacts ADP. Position 240 (Gly-240) interacts with CDP. Residues Gly-241 and Gly-315 each coordinate AMP. Residues Gly-241 and Gly-315 each coordinate ATP. The CDP site is built by Gly-340 and Phe-345. Phe-345 lines the ADP pocket. Glu-346 is an AMP binding site. The ATP site is built by Glu-346, Asp-377, and Thr-378. Asp-377 is a binding site for Mg(2+).

This sequence belongs to the phosphoglycerate kinase family. Monomer. Mg(2+) is required as a cofactor.

The protein localises to the cytoplasm. It is found in the mitochondrion. The enzyme catalyses (2R)-3-phosphoglycerate + ATP = (2R)-3-phospho-glyceroyl phosphate + ADP. Its pathway is carbohydrate degradation; glycolysis; pyruvate from D-glyceraldehyde 3-phosphate: step 2/5. In terms of biological role, catalyzes one of the two ATP producing reactions in the glycolytic pathway via the reversible conversion of 1,3-diphosphoglycerate to 3-phosphoglycerate. Both L- and D- forms of purine and pyrimidine nucleotides can be used as substrates, but the activity is much lower on pyrimidines. Negatively regulates the biosynthesis of acetyl-CoA from pyruvate in the mitochondrion. The sequence is that of Phosphoglycerate kinase (pgkA) from Emericella nidulans (strain FGSC A4 / ATCC 38163 / CBS 112.46 / NRRL 194 / M139) (Aspergillus nidulans).